The following is a 284-amino-acid chain: Protein phosphatase 1 regulatory subunit 3B (284 aa).

The PP1-binding motif signature appears at 61–64 (RVSF). The 109-residue stretch at 124-232 (RNRLQTDHVC…SNKGKNYRII (109 aa)) folds into the CBM21 domain. The residue at position 260 (serine 260) is a Phosphoserine.

As to quaternary structure, interacts with glycogen, PPP1CC catalytic subunit of PP1 and PYGL. Associates with glycogen particles. Forms complexes with debranching enzyme, glycogen phosphorylase, glycogen synthase and phosphorylase kinase which is necessary for its regulation of PP1 activity.

Functionally, acts as a glycogen-targeting subunit for phosphatase PP1. Facilitates interaction of the PP1 with enzymes of the glycogen metabolism and regulates its activity. Suppresses the rate at which PP1 dephosphorylates (inactivates) glycogen phosphorylase and enhances the rate at which it activates glycogen synthase and therefore limits glycogen breakdown. Its activity is inhibited by PYGL, resulting in inhibition of the glycogen synthase and glycogen phosphorylase phosphatase activities of PP1. Dramatically increases basal and insulin-stimulated glycogen synthesis upon overexpression in hepatocytes. The polypeptide is Protein phosphatase 1 regulatory subunit 3B (PPP1R3B) (Bos taurus (Bovine)).